Here is a 298-residue protein sequence, read N- to C-terminus: NFU1 iron-sulfur cluster scaffold homolog, mitochondrial (298 aa).

Residues 194 to 262 (IKELLDTRIR…IPEVESVEQV (69 aa)) are nifU. [4Fe-4S] cluster is bound by residues cysteine 231 and cysteine 234.

Belongs to the NifU family.

Its subcellular location is the mitochondrion. In terms of biological role, molecular scaffold for [Fe-S] cluster assembly of mitochondrial iron-sulfur proteins. The sequence is that of NFU1 iron-sulfur cluster scaffold homolog, mitochondrial from Drosophila grimshawi (Hawaiian fruit fly).